A 243-amino-acid chain; its full sequence is MRRPVIAGNWKMHMTCAQARDYMAAFLPQIERAPQDREIVLAPPFTALSTMAAAAEHSVVGLASQNVHWQDHGAFTAEISAEMLLEHGVAYTIVGHSEPRKYFSESDEQINHRARCSQAKGLIPIVCVGESDEQRERGEAERVIRRQIEQGLEGLDANKLVVAYEPIWAIGTGKTCEAAEANRICGLIRSWVGATDLIIQYGGSVKPTNIDELMAMSDIDGVLVGGASLKPDSFARIANYQAI.

Residue 9-11 coordinates substrate; the sequence is NWK. His-96 serves as the catalytic Electrophile. Catalysis depends on Glu-165, which acts as the Proton acceptor. Residues Gly-171, Ser-204, and 225–226 contribute to the substrate site; that span reads GG.

The protein belongs to the triosephosphate isomerase family. In terms of assembly, homodimer.

The protein localises to the cytoplasm. It carries out the reaction D-glyceraldehyde 3-phosphate = dihydroxyacetone phosphate. The protein operates within carbohydrate biosynthesis; gluconeogenesis. It participates in carbohydrate degradation; glycolysis; D-glyceraldehyde 3-phosphate from glycerone phosphate: step 1/1. In terms of biological role, involved in the gluconeogenesis. Catalyzes stereospecifically the conversion of dihydroxyacetone phosphate (DHAP) to D-glyceraldehyde-3-phosphate (G3P). The chain is Triosephosphate isomerase from Parasynechococcus marenigrum (strain WH8102).